Reading from the N-terminus, the 187-residue chain is Cerebral dopamine neurotrophic factor (187 aa).

The first 24 residues, 1–24 (MRCISPTALVTFCAGFCISNPVLA), serve as a signal peptide directing secretion. 3 disulfides stabilise this stretch: cysteine 37/cysteine 124, cysteine 40/cysteine 113, and cysteine 71/cysteine 82.

The protein belongs to the ARMET family. In terms of tissue distribution, expressed at high levels in the heart, skeletal muscle, testis and brain (at protein level). In the brain, detected in the cerebral cortex neurons through layers II to VI. In the hippocampus, detected in the CA1 to CA3 pyramidal regions and in the granule and polymorph layers of dentate gyrus. Weak expression in the striatum. In substantia nigra, detected in solitary cells that did not express tyrosine hydroxylase, a marker for dopaminergic neurons. Relatively high expression in the Purkinje cells of the cerebellum and in regions of the brain stem, including the locus coeruleus.

The protein resides in the secreted. In terms of biological role, trophic factor for dopamine neurons. Prevents the 6-hydroxydopamine (6-OHDA)-induced degeneration of dopaminergic neurons. When administered after 6-OHDA-lesioning, restores the dopaminergic function and prevents the degeneration of dopaminergic neurons in substantia nigra. This is Cerebral dopamine neurotrophic factor (Cdnf) from Mus musculus (Mouse).